The following is a 456-amino-acid chain: Bifunctional protein GlmU (456 aa).

Residues 1 to 231 (MERTCLAIIL…EEELTGCNTR (231 aa)) form a pyrophosphorylase region. Residues 10–13 (LAAG), K24, Q77, and 82–83 (GT) each bind UDP-N-acetyl-alpha-D-glucosamine. D107 contacts Mg(2+). UDP-N-acetyl-alpha-D-glucosamine-binding residues include G143, E157, N172, and N229. N229 contributes to the Mg(2+) binding site. The linker stretch occupies residues 232-252 (AELAYIERLWQQRRRHELMLA). The tract at residues 253-456 (GVSMVAPETV…LARKIAKAAE (204 aa)) is N-acetyltransferase. The UDP-N-acetyl-alpha-D-glucosamine site is built by R318 and K336. H348 functions as the Proton acceptor in the catalytic mechanism. UDP-N-acetyl-alpha-D-glucosamine contacts are provided by Y351 and N362. Acetyl-CoA contacts are provided by residues A365, 371-372 (NY), S390, S408, and R425.

In the N-terminal section; belongs to the N-acetylglucosamine-1-phosphate uridyltransferase family. It in the C-terminal section; belongs to the transferase hexapeptide repeat family. Homotrimer. It depends on Mg(2+) as a cofactor.

Its subcellular location is the cytoplasm. The catalysed reaction is alpha-D-glucosamine 1-phosphate + acetyl-CoA = N-acetyl-alpha-D-glucosamine 1-phosphate + CoA + H(+). The enzyme catalyses N-acetyl-alpha-D-glucosamine 1-phosphate + UTP + H(+) = UDP-N-acetyl-alpha-D-glucosamine + diphosphate. Its pathway is nucleotide-sugar biosynthesis; UDP-N-acetyl-alpha-D-glucosamine biosynthesis; N-acetyl-alpha-D-glucosamine 1-phosphate from alpha-D-glucosamine 6-phosphate (route II): step 2/2. It functions in the pathway nucleotide-sugar biosynthesis; UDP-N-acetyl-alpha-D-glucosamine biosynthesis; UDP-N-acetyl-alpha-D-glucosamine from N-acetyl-alpha-D-glucosamine 1-phosphate: step 1/1. The protein operates within bacterial outer membrane biogenesis; LPS lipid A biosynthesis. In terms of biological role, catalyzes the last two sequential reactions in the de novo biosynthetic pathway for UDP-N-acetylglucosamine (UDP-GlcNAc). The C-terminal domain catalyzes the transfer of acetyl group from acetyl coenzyme A to glucosamine-1-phosphate (GlcN-1-P) to produce N-acetylglucosamine-1-phosphate (GlcNAc-1-P), which is converted into UDP-GlcNAc by the transfer of uridine 5-monophosphate (from uridine 5-triphosphate), a reaction catalyzed by the N-terminal domain. The protein is Bifunctional protein GlmU of Sinorhizobium medicae (strain WSM419) (Ensifer medicae).